The primary structure comprises 340 residues: Sodium/bile acid cotransporter 7 (340 aa).

At 1–10 the chain is on the cytoplasmic side; sequence MRLLERARKE. The chain crosses the membrane as a helical span at residues 11-31; that stretch reads WFMVGIVVAIGAAKLEPSVGV. The Extracellular segment spans residues 32–37; that stretch reads NGGPLK. A helical membrane pass occupies residues 38 to 58; sequence PEITVSYIAVATIFFNSGLSL. The Cytoplasmic portion of the chain corresponds to 59 to 71; the sequence is KTEELTSALVHLR. A helical transmembrane segment spans residues 72 to 92; that stretch reads LHLFIQIFTLAFFPAAIWLFL. Residues 93–116 are Extracellular-facing; the sequence is QLLSVTSINEWLLKGLQTVGCMPP. The helical transmembrane segment at 117-137 threads the bilayer; it reads PVSSAVILTKAVGGNEAAAIF. Asn-138 is a topological domain (cytoplasmic). The chain crosses the membrane as a helical span at residues 139-159; it reads SAFGSFLGIVVTPVLLLLFLG. Over 160-163 the chain is Extracellular; sequence SSSS. The helical transmembrane segment at 164-184 threads the bilayer; it reads VPFTSIFSQLFMTVVVPLVIG. Residues 185-201 are Cytoplasmic-facing; the sequence is QIVRRYIKDWLERKKPP. A helical membrane pass occupies residues 202-222; that stretch reads FGVVSSSVLLMIIYTTFCDTF. The Extracellular portion of the chain corresponds to 223 to 234; the sequence is SNPNIDLDKFSL. Residues 235–255 traverse the membrane as a helical segment; sequence ILILFIIVSVQLSFMLLTFIF. At 256 to 270 the chain is on the cytoplasmic side; the sequence is STRNNSGFTPADTVA. A helical transmembrane segment spans residues 271–291; the sequence is IIFCSTHKSLTLGIPMLKIVF. Over 292–298 the chain is Extracellular; the sequence is AGHEHLS. Residues 299–319 traverse the membrane as a helical segment; it reads LISVPLLIYHPAQILLGSVLV. The Cytoplasmic segment spans residues 320 to 340; it reads PTIKSWMVSRQKGVKLTRPTV.

The protein belongs to the bile acid:sodium symporter (BASS) (TC 2.A.28) family. Expressed in heart, brain, colon, lung, liver, adrenal gland, stomach and ovary. Also expressed weakly in small intestine. Expressed in skeletal tissues.

Its subcellular location is the cell membrane. It is found in the endoplasmic reticulum membrane. It localises to the golgi apparatus membrane. Its function is as follows. Involved in teeth and skeletal development. Has an essential role in the biosynthesis and trafficking of glycosaminoglycans and glycoproteins to produce a proper functioning extracellular matrix. Required for extracellular matrix mineralization. Also involved in the regulation of cellular calcium homeostasis. Does not show transport activity towards bile acids or steroid sulfates (including taurocholate, cholate, chenodeoxycholate, estrone-3-sulfate, dehydroepiandrosterone sulfate (DHEAS) and pregnenolone sulfate). The polypeptide is Sodium/bile acid cotransporter 7 (Slc10a7) (Mus musculus (Mouse)).